The sequence spans 782 residues: Endonuclease MutS2 (782 aa).

ATP is bound at residue Gly-336–Thr-343. Residues Leu-707–Lys-782 enclose the Smr domain.

Belongs to the DNA mismatch repair MutS family. MutS2 subfamily. As to quaternary structure, homodimer. Binds to stalled ribosomes, contacting rRNA.

Functionally, endonuclease that is involved in the suppression of homologous recombination and thus may have a key role in the control of bacterial genetic diversity. Its function is as follows. Acts as a ribosome collision sensor, splitting the ribosome into its 2 subunits. Detects stalled/collided 70S ribosomes which it binds and splits by an ATP-hydrolysis driven conformational change. Acts upstream of the ribosome quality control system (RQC), a ribosome-associated complex that mediates the extraction of incompletely synthesized nascent chains from stalled ribosomes and their subsequent degradation. Probably generates substrates for RQC. This chain is Endonuclease MutS2, found in Staphylococcus aureus (strain COL).